A 248-amino-acid polypeptide reads, in one-letter code: Probable transcriptional regulatory protein BOV_1660 (248 aa).

The protein belongs to the TACO1 family.

The protein localises to the cytoplasm. This Brucella ovis (strain ATCC 25840 / 63/290 / NCTC 10512) protein is Probable transcriptional regulatory protein BOV_1660.